The chain runs to 226 residues: Ribose-5-phosphate isomerase A (226 aa).

Residues 26 to 29 (TGST), 82 to 85 (DGAD), and 95 to 98 (KGGG) contribute to the substrate site. The active-site Proton acceptor is glutamate 104. Lysine 122 provides a ligand contact to substrate.

It belongs to the ribose 5-phosphate isomerase family. Homodimer.

It carries out the reaction aldehydo-D-ribose 5-phosphate = D-ribulose 5-phosphate. It participates in carbohydrate degradation; pentose phosphate pathway; D-ribose 5-phosphate from D-ribulose 5-phosphate (non-oxidative stage): step 1/1. Catalyzes the reversible conversion of ribose-5-phosphate to ribulose 5-phosphate. The polypeptide is Ribose-5-phosphate isomerase A (Streptococcus thermophilus (strain ATCC BAA-250 / LMG 18311)).